Here is a 333-residue protein sequence, read N- to C-terminus: Phenylalanine--tRNA ligase alpha subunit (333 aa).

Position 248 (Glu248) interacts with Mg(2+).

It belongs to the class-II aminoacyl-tRNA synthetase family. Phe-tRNA synthetase alpha subunit type 1 subfamily. Tetramer of two alpha and two beta subunits. Requires Mg(2+) as cofactor.

It is found in the cytoplasm. It carries out the reaction tRNA(Phe) + L-phenylalanine + ATP = L-phenylalanyl-tRNA(Phe) + AMP + diphosphate + H(+). This is Phenylalanine--tRNA ligase alpha subunit from Ureaplasma urealyticum serovar 10 (strain ATCC 33699 / Western).